A 255-amino-acid polypeptide reads, in one-letter code: 5'-nucleotidase SurE (255 aa).

Asp-16, Asp-17, Ser-47, and Asn-100 together coordinate a divalent metal cation.

This sequence belongs to the SurE nucleotidase family. It depends on a divalent metal cation as a cofactor.

Its subcellular location is the cytoplasm. The catalysed reaction is a ribonucleoside 5'-phosphate + H2O = a ribonucleoside + phosphate. Functionally, nucleotidase that shows phosphatase activity on nucleoside 5'-monophosphates. This chain is 5'-nucleotidase SurE, found in Vibrio vulnificus (strain CMCP6).